The primary structure comprises 261 residues: CD40 ligand (261 aa).

The Cytoplasmic segment spans residues 1 to 22; the sequence is MIETYNQPSPRSAATGLPVRMK. The helical; Signal-anchor for type II membrane protein transmembrane segment at 23-43 threads the bilayer; sequence IFMYLLTIFLITQMIGSALFA. Over 44-261 the chain is Extracellular; sequence VYLHRRLDKI…GFTSFGLLKL (218 aa). A THD domain is found at 122–261; it reads IAAHVISEAS…GFTSFGLLKL (140 aa). Cys-178 and Cys-218 form a disulfide bridge. N-linked (GlcNAc...) asparagine glycosylation is present at Asn-240.

It belongs to the tumor necrosis factor family. In terms of assembly, homotrimer. Interacts with CD28. CD40 ligand, soluble form: Exists as either a monomer or a homotrimer. Forms a ternary complex between CD40 and integrins for CD40-CD40LG signaling. Post-translationally, the soluble form derives from the membrane form by proteolytic processing.

It is found in the cell membrane. The protein resides in the cell surface. Its subcellular location is the secreted. Its function is as follows. Cytokine that acts as a ligand to CD40/TNFRSF5. Costimulates T-cell proliferation and cytokine production. Its cross-linking on T-cells generates a costimulatory signal which enhances the production of IL4 and IL10 in conjunction with the TCR/CD3 ligation and CD28 costimulation. Induces the activation of NF-kappa-B. Induces the activation of kinases MAPK8 and PAK2 in T-cells. Mediates B-cell proliferation in the absence of co-stimulus as well as IgE production in the presence of IL4. Involved in immunoglobulin class switching. Functionally, acts as a ligand for integrins, specifically ITGA5:ITGB1 and ITGAV:ITGB3; both integrins and the CD40 receptor are required for activation of CD40-CD40LG signaling, which have cell-type dependent effects, such as B-cell activation, NF-kappa-B signaling and anti-apoptotic signaling. The protein is CD40 ligand (CD40LG) of Cercocebus atys (Sooty mangabey).